The sequence spans 969 residues: Protein translocase subunit SecA (969 aa).

Residues Gln99, 117–121, and Asp631 contribute to the ATP site; that span reads GEGKT.

It belongs to the SecA family. Monomer and homodimer. Part of the essential Sec protein translocation apparatus which comprises SecA, SecYEG and auxiliary proteins SecDF. Other proteins may also be involved.

The protein localises to the cell inner membrane. It is found in the cytoplasm. The catalysed reaction is ATP + H2O + cellular proteinSide 1 = ADP + phosphate + cellular proteinSide 2.. Functionally, part of the Sec protein translocase complex. Interacts with the SecYEG preprotein conducting channel. Has a central role in coupling the hydrolysis of ATP to the transfer of proteins into and across the cell membrane, serving as an ATP-driven molecular motor driving the stepwise translocation of polypeptide chains across the membrane. The polypeptide is Protein translocase subunit SecA (Chlamydia trachomatis serovar L2 (strain ATCC VR-902B / DSM 19102 / 434/Bu)).